We begin with the raw amino-acid sequence, 933 residues long: Valine--tRNA ligase (933 aa).

The 'HIGH' region motif lies at 58-68; sequence PNVTGSLHMGH. The 'KMSKS' region signature appears at 556 to 560; sequence KMSKS. Residue K559 participates in ATP binding. 2 coiled-coil regions span residues 807–833 and 864–933; these read VTKNQNLLNLLKKATQDIQALTRANKV and EGLV…LGLK.

The protein belongs to the class-I aminoacyl-tRNA synthetase family. ValS type 1 subfamily. As to quaternary structure, monomer.

It localises to the cytoplasm. The catalysed reaction is tRNA(Val) + L-valine + ATP = L-valyl-tRNA(Val) + AMP + diphosphate. In terms of biological role, catalyzes the attachment of valine to tRNA(Val). As ValRS can inadvertently accommodate and process structurally similar amino acids such as threonine, to avoid such errors, it has a 'posttransfer' editing activity that hydrolyzes mischarged Thr-tRNA(Val) in a tRNA-dependent manner. The sequence is that of Valine--tRNA ligase from Prochlorococcus marinus (strain SARG / CCMP1375 / SS120).